The primary structure comprises 165 residues: ER membrane protein complex subunit 5 (165 aa).

The Cytoplasmic portion of the chain corresponds to methionine 1–proline 3. Residues serine 4–phenylalanine 22 traverse the membrane as a helical segment. Over serine 23 to isoleucine 77 the chain is Lumenal. A helical membrane pass occupies residues aspartate 78–isoleucine 97. Topologically, residues alanine 98–arginine 165 are cytoplasmic. Serine 154 is modified (phosphoserine).

The protein belongs to the membrane magnesium transporter (TC 1.A.67) family. As to quaternary structure, component of the ER membrane protein complex (EMC).

The protein resides in the endoplasmic reticulum membrane. The protein localises to the golgi apparatus membrane. Its subcellular location is the early endosome membrane. Functionally, part of the endoplasmic reticulum membrane protein complex (EMC) that enables the energy-independent insertion into endoplasmic reticulum membranes of newly synthesized membrane proteins. Preferentially accommodates proteins with transmembrane domains that are weakly hydrophobic or contain destabilizing features such as charged and aromatic residues. Involved in the cotranslational insertion of multi-pass membrane proteins in which stop-transfer membrane-anchor sequences become ER membrane spanning helices. It is also required for the post-translational insertion of tail-anchored/TA proteins in endoplasmic reticulum membranes. By mediating the proper cotranslational insertion of N-terminal transmembrane domains in an N-exo topology, with translocated N-terminus in the lumen of the ER, controls the topology of multi-pass membrane proteins like the G protein-coupled receptors. By regulating the insertion of various proteins in membranes, it is indirectly involved in many cellular processes. May be involved in Mg(2+) transport. In Bos taurus (Bovine), this protein is ER membrane protein complex subunit 5.